The sequence spans 199 residues: dCTP deaminase (199 aa).

Residues 110-115, D128, 136-138, Y171, and Q182 contribute to the dCTP site; these read RSSLAR and VLE. E138 acts as the Proton donor/acceptor in catalysis.

It belongs to the dCTP deaminase family. Homotrimer.

It carries out the reaction dCTP + H2O + H(+) = dUTP + NH4(+). It participates in pyrimidine metabolism; dUMP biosynthesis; dUMP from dCTP (dUTP route): step 1/2. In terms of biological role, catalyzes the deamination of dCTP to dUTP. The chain is dCTP deaminase from Pseudoalteromonas atlantica (strain T6c / ATCC BAA-1087).